Here is a 139-residue protein sequence, read N- to C-terminus: Putative nickel-responsive regulator (139 aa).

Residues His79, His90, His92, and Cys98 each contribute to the Ni(2+) site.

Belongs to the transcriptional regulatory CopG/NikR family. Requires Ni(2+) as cofactor.

Functionally, transcriptional regulator. The sequence is that of Putative nickel-responsive regulator from Nitratidesulfovibrio vulgaris (strain ATCC 29579 / DSM 644 / CCUG 34227 / NCIMB 8303 / VKM B-1760 / Hildenborough) (Desulfovibrio vulgaris).